The following is a 633-amino-acid chain: Shootin-1 (633 aa).

M1 carries the post-translational modification N-acetylmethionine. A phosphoserine mark is found at S3 and S4. Residues 7 to 353 (EKQLQLITSL…RVNQSENSVP (347 aa)) adopt a coiled-coil conformation. 2 positions are modified to phosphoserine; by PAK1: S101 and S249. The segment at 343–508 (KRVNQSENSV…LATSESKSMP (166 aa)) is disordered. Over residues 352 to 369 (VPPPPPPPPPLPPPPPNP) the composition is skewed to pro residues. S375 is subject to Phosphoserine. Basic and acidic residues predominate over residues 403 to 418 (TDLKRQAVEEMMDRIK). Positions 456 to 465 (LNKSTSSRSL) are enriched in polar residues. Phosphoserine is present on S473. T487 carries the phosphothreonine modification. A compositionally biased stretch (polar residues) spans 490 to 505 (ADSSSPTGILATSESK). The residue at position 494 (S494) is a Phosphoserine. T496 carries the post-translational modification Phosphothreonine. 2 positions are modified to phosphoserine: S506 and S515. The segment at 525–633 (TLEAEFNNPC…KTGETDSSNC (109 aa)) is disordered. The residue at position 537 (T537) is a Phosphothreonine. Positions 550–559 (CTNSKVTFQP) are enriched in polar residues. Positions 590-621 (PQTKDQAAEKDPTQCKEEERGETQPEFKEDSS) are enriched in basic and acidic residues.

Belongs to the shootin family. As to quaternary structure, interacts with PFN2. Interacts (via N-terminus) with KIF20B; this interaction is direct and promotes the association of SHTN1 to microtubules in primary neurons. Associates with microtubule. Interacts with L1CAM; this interaction occurs in axonal growth cones. Interacts with actin filament retrograde flow; this interaction is enhanced in a netrin-1- and PAK1-dependent manner and promotes F-actin-substrate coupling and concomitant formation of traction forces at axonal growth cones. Interacts with RUFY3. In terms of processing, phosphorylated on Ser-101 and Ser-249 by PAK1 through a CDC42- and RAC1-dependent signaling pathway, which enhances its association with F-actin retrograde flow in filopodia and lamellipodia of axonal growth cones. Phosphorylation on Ser-101 and Ser-249 is increased by netrin-1. Brain-specific (at protein level). Expressed in hippocampal neurons.

The protein resides in the perikaryon. The protein localises to the cell projection. It is found in the axon. It localises to the growth cone. Its subcellular location is the cytoplasm. The protein resides in the cytoskeleton. The protein localises to the filopodium. It is found in the lamellipodium. Functionally, involved in the generation of internal asymmetric signals required for neuronal polarization and neurite outgrowth. Mediates netrin-1-induced F-actin-substrate coupling or 'clutch engagement' within the axon growth cone through activation of CDC42, RAC1 and PAK1-dependent signaling pathway, thereby converting the F-actin retrograde flow into traction forces, concomitantly with filopodium extension and axon outgrowth. Plays a role in cytoskeletal organization by regulating the subcellular localization of phosphoinositide 3-kinase (PI3K) activity at the axonal growth cone. Also plays a role in regenerative neurite outgrowth. In the developing cortex, cooperates with KIF20B to promote both the transition from the multipolar to the bipolar stage and the radial migration of cortical neurons from the ventricular zone toward the superficial layer of the neocortex. Involved in the accumulation of phosphatidylinositol 3,4,5-trisphosphate (PIP3) in the growth cone of primary hippocampal neurons. This Rattus norvegicus (Rat) protein is Shootin-1.